The following is a 410-amino-acid chain: Structural protein ORF142 (410 aa).

Disordered regions lie at residues 1 to 24 and 156 to 197; these read MNQN…HVDT and PTST…VNIS. Residues 161–188 show a composition bias toward acidic residues; sequence DDNDNENRSDDDDDDDDYRNDREEVEDS.

The protein localises to the virion. The polypeptide is Structural protein ORF142 (Trichoplusia ni ascovirus 2c (TnAV-2c)).